Here is a 475-residue protein sequence, read N- to C-terminus: Aspartyl/glutamyl-tRNA(Asn/Gln) amidotransferase subunit B (475 aa).

The protein belongs to the GatB/GatE family. GatB subfamily. As to quaternary structure, heterotrimer of A, B and C subunits.

It carries out the reaction L-glutamyl-tRNA(Gln) + L-glutamine + ATP + H2O = L-glutaminyl-tRNA(Gln) + L-glutamate + ADP + phosphate + H(+). The catalysed reaction is L-aspartyl-tRNA(Asn) + L-glutamine + ATP + H2O = L-asparaginyl-tRNA(Asn) + L-glutamate + ADP + phosphate + 2 H(+). Allows the formation of correctly charged Asn-tRNA(Asn) or Gln-tRNA(Gln) through the transamidation of misacylated Asp-tRNA(Asn) or Glu-tRNA(Gln) in organisms which lack either or both of asparaginyl-tRNA or glutaminyl-tRNA synthetases. The reaction takes place in the presence of glutamine and ATP through an activated phospho-Asp-tRNA(Asn) or phospho-Glu-tRNA(Gln). The chain is Aspartyl/glutamyl-tRNA(Asn/Gln) amidotransferase subunit B from Pediococcus pentosaceus (strain ATCC 25745 / CCUG 21536 / LMG 10740 / 183-1w).